Here is a 304-residue protein sequence, read N- to C-terminus: Glycine--tRNA ligase alpha subunit (304 aa).

It belongs to the class-II aminoacyl-tRNA synthetase family. As to quaternary structure, tetramer of two alpha and two beta subunits.

It localises to the cytoplasm. The enzyme catalyses tRNA(Gly) + glycine + ATP = glycyl-tRNA(Gly) + AMP + diphosphate. The sequence is that of Glycine--tRNA ligase alpha subunit from Actinobacillus pleuropneumoniae serotype 3 (strain JL03).